A 212-amino-acid chain; its full sequence is Phosphoribosylglycinamide formyltransferase (212 aa).

11 to 13 (GSN) contacts N(1)-(5-phospho-beta-D-ribosyl)glycinamide. Residues R64, 89 to 92 (MRIL), and N106 each bind (6R)-10-formyltetrahydrofolate. The Proton donor role is filled by H108. 140-144 (TDELD) serves as a coordination point for (6R)-10-formyltetrahydrofolate. Residue 170-173 (QTQE) coordinates N(1)-(5-phospho-beta-D-ribosyl)glycinamide.

It belongs to the GART family. In terms of assembly, monomer. Homodimer below pH 6.8.

It catalyses the reaction N(1)-(5-phospho-beta-D-ribosyl)glycinamide + (6R)-10-formyltetrahydrofolate = N(2)-formyl-N(1)-(5-phospho-beta-D-ribosyl)glycinamide + (6S)-5,6,7,8-tetrahydrofolate + H(+). The protein operates within purine metabolism; IMP biosynthesis via de novo pathway; N(2)-formyl-N(1)-(5-phospho-D-ribosyl)glycinamide from N(1)-(5-phospho-D-ribosyl)glycinamide (10-formyl THF route): step 1/1. Inhibited by N10-(bromoacetyl)-5,8-dideazafolate. In terms of biological role, catalyzes the transfer of a formyl group from 10-formyltetrahydrofolate to 5-phospho-ribosyl-glycinamide (GAR), producing 5-phospho-ribosyl-N-formylglycinamide (FGAR) and tetrahydrofolate. This is Phosphoribosylglycinamide formyltransferase from Escherichia coli (strain K12).